The sequence spans 206 residues: Sclerostin domain-containing protein 1 (206 aa).

The signal sequence occupies residues 1–23 (MLPPAIHFYLLPLACILMKSCLA). Residue Asn-47 is glycosylated (N-linked (GlcNAc...) asparagine). Disulfide bonds link Cys-75–Cys-133, Cys-89–Cys-147, Cys-100–Cys-163, and Cys-104–Cys-165. The 96-residue stretch at 75–170 (CRELRSTKYI…TACKCKRYTR (96 aa)) folds into the CTCK domain. The N-linked (GlcNAc...) asparagine glycan is linked to Asn-173. The interval 174-206 (ESSHNFESMSPAKPVQHHRERKRASKSSKHSMS) is disordered. The segment covering 188–206 (VQHHRERKRASKSSKHSMS) has biased composition (basic residues).

Belongs to the sclerostin family. As to quaternary structure, interacts with BMP2, BMP4, BMP6 and BMP7 with high affinity. As to expression, highly expressed in kidney and weakly in lung.

The protein resides in the secreted. In terms of biological role, may be involved in the onset of endometrial receptivity for implantation/sensitization for the decidual cell reaction Enhances Wnt signaling and inhibits TGF-beta signaling. Directly antagonizes activity of BMP2, BMP4, BMP6 and BMP7 in a dose-dependent manner. The sequence is that of Sclerostin domain-containing protein 1 (SOSTDC1) from Homo sapiens (Human).